The chain runs to 597 residues: NADPH-dependent diflavin oxidoreductase 1 (597 aa).

Residues 6–150 (LLVLFGSQTG…AIDPWLQDLW (145 aa)) form the Flavodoxin-like domain. FMN contacts are provided by residues 12–17 (SQTGTA), 59–62 (ATTG), 97–106 (LGDSSYAKFN), and Asp132. An FAD-binding FR-type domain is found at 206–446 (LQPFLAPMVS…WVRSGGLTFP (241 aa)). FAD is bound by residues Arg350, 382–385 (RAFS), and 416–419 (GLCS). NADP(+)-binding positions include Thr460, 515–516 (SR), 521–525 (KVYVQ), and Asp558. Trp596 provides a ligand contact to FAD.

It belongs to the NADPH-dependent diflavin oxidoreductase NDOR1 family. This sequence in the N-terminal section; belongs to the flavodoxin family. In the C-terminal section; belongs to the flavoprotein pyridine nucleotide cytochrome reductase family. Interacts with CIAPIN1; as part of the cytosolic iron-sulfur (Fe-S) protein assembly (CIA) machinery. Interacts with DCPS. FAD serves as cofactor. Requires FMN as cofactor.

It is found in the cytoplasm. It localises to the perinuclear region. The catalysed reaction is 2 oxidized [2Fe-2S]-[protein] + NADPH = 2 reduced [2Fe-2S]-[protein] + NADP(+) + H(+). In terms of biological role, NADPH-dependent reductase which is a central component of the cytosolic iron-sulfur (Fe-S) protein assembly (CIA) machinery. Transfers electrons from NADPH via its FAD and FMN prosthetic groups to the [2Fe-2S] cluster of CIAPIN1, another key component of the CIA machinery. In turn, this reduced cluster provides electrons for assembly of cytosolic iron-sulfur cluster proteins. It can also reduce the [2Fe-2S] cluster of CISD1 and activate this protein implicated in Fe/S cluster repair. In vitro can fully activate methionine synthase/MTR in the presence of soluble cytochrome b5/CYB5A. This chain is NADPH-dependent diflavin oxidoreductase 1, found in Bos taurus (Bovine).